The sequence spans 556 residues: Delta-1-pyrroline-5-carboxylate dehydrogenase, mitochondrial (556 aa).

The N-terminal 17 residues, 1-17 (MLRARSAVSQSWKGFKT), are a transit peptide targeting the mitochondrion. NAD(+)-binding positions include K226 and 279 to 283 (GSVPT). E307 (proton acceptor) is an active-site residue. C341 functions as the Nucleophile in the catalytic mechanism. E440 serves as a coordination point for NAD(+). S506 contacts substrate.

It belongs to the aldehyde dehydrogenase family.

The protein resides in the mitochondrion matrix. It catalyses the reaction L-glutamate 5-semialdehyde + NAD(+) + H2O = L-glutamate + NADH + 2 H(+). Its pathway is amino-acid degradation; L-proline degradation into L-glutamate; L-glutamate from L-proline: step 2/2. Functionally, irreversible conversion of delta-1-pyrroline-5-carboxylate (P5C), derived either from proline or ornithine, to glutamate. This is a necessary step in the pathway interconnecting the urea and tricarboxylic acid cycles. The chain is Delta-1-pyrroline-5-carboxylate dehydrogenase, mitochondrial (aldh4a1) from Danio rerio (Zebrafish).